Here is a 341-residue protein sequence, read N- to C-terminus: HTH-type transcriptional repressor PurR (341 aa).

The 55-residue stretch at 2–56 (ATIKDVAKRANVSTTTVSHVINKTRFVAEETRNAVWTAIKELHYSPSAVARSLKV) folds into the HTH lacI-type domain. Residues 4-23 (IKDVAKRANVSTTTVSHVIN) constitute a DNA-binding region (H-T-H motif). A DNA-binding region spans residues 48 to 56 (SAVARSLKV). Hypoxanthine contacts are provided by Tyr-73, Arg-190, Thr-192, Phe-221, and Asp-275.

Homodimer.

It functions in the pathway purine metabolism; purine nucleotide biosynthesis [regulation]. In terms of biological role, is the main repressor of the genes involved in the de novo synthesis of purine nucleotides, regulating purB, purC, purEK, purF, purHD, purL, purMN and guaBA expression. PurR is allosterically activated to bind its cognate DNA by binding the purine corepressors, hypoxanthine or guanine, thereby effecting transcription repression. This is HTH-type transcriptional repressor PurR from Salmonella paratyphi A (strain ATCC 9150 / SARB42).